The primary structure comprises 480 residues: Amino acid permease 5 (480 aa).

Positions Met-1–Arg-25 are disordered. Over Met-1 to Thr-31 the chain is Cytoplasmic. The segment covering Val-11–Arg-25 has biased composition (basic and acidic residues). The next 2 helical transmembrane spans lie at Val-32–Ala-52 and Trp-53–Val-73. Over Thr-74–Tyr-120 the chain is Cytoplasmic. The helical transmembrane segment at Val-121–Ile-141 threads the bilayer. Topologically, residues Gln-142 to His-157 are extracellular. The helical transmembrane segment at Val-158–Pro-178 threads the bilayer. Topologically, residues Asp-179 to Gln-182 are cytoplasmic. Residues Leu-183 to Gly-203 traverse the membrane as a helical segment. Residues Leu-204–Arg-241 lie on the Extracellular side of the membrane. Residues Thr-242–Ile-262 form a helical membrane-spanning segment. Topologically, residues Gln-263–Thr-280 are cytoplasmic. The helical transmembrane segment at Phe-281–Ala-301 threads the bilayer. At Phe-302–Leu-328 the chain is on the extracellular side. The chain crosses the membrane as a helical span at residues Ala-329–Val-349. The Cytoplasmic portion of the chain corresponds to Glu-350 to Arg-383. The chain crosses the membrane as a helical span at residues Leu-384–Phe-404. Residues Asn-405–Asp-406 are Extracellular-facing. A helical membrane pass occupies residues Val-407–Met-427. Residues Tyr-428–Gln-445 lie on the Cytoplasmic side of the membrane. A helical transmembrane segment spans residues Val-446–Ile-466. The Extracellular portion of the chain corresponds to Val-467–Phe-480.

It belongs to the amino acid/polyamine transporter 2 family. Amino acid/auxin permease (AAAP) (TC 2.A.18.2) subfamily. As to expression, expressed in leaves, stems, roots, siliques and flowers.

The protein localises to the cell membrane. With respect to regulation, inhibited by 2,4-dinitrophenol. Amino acid-proton symporter. Stereospecific transporter with a broad specificity for glutamate and both neutral and basic amino acids. Reduced affinities for asparagine and valine. High affinity transport of the cationic amino acids arginine and lysine, but not of histidine. This Arabidopsis thaliana (Mouse-ear cress) protein is Amino acid permease 5 (AAP5).